Here is a 248-residue protein sequence, read N- to C-terminus: Phosphatidylglycerol--prolipoprotein diacylglyceryl transferase (248 aa).

The next 3 membrane-spanning stretches (helical) occupy residues 6–26 (FTLFGIDIMWYGILMACGMIL), 47–67 (NIAIIAIPVGLICARIYYVVF), and 84–104 (GGGLAIHGGLIGGILAGYIYT). Residue Arg130 coordinates a 1,2-diacyl-sn-glycero-3-phospho-(1'-sn-glycerol). A run of 2 helical transmembrane segments spans residues 186-206 (GQVIVTYITLYSIGRFFIEGL) and 218-238 (MAQVISLIGVIGGIIAHVYLS).

Belongs to the Lgt family.

It localises to the cell membrane. The enzyme catalyses L-cysteinyl-[prolipoprotein] + a 1,2-diacyl-sn-glycero-3-phospho-(1'-sn-glycerol) = an S-1,2-diacyl-sn-glyceryl-L-cysteinyl-[prolipoprotein] + sn-glycerol 1-phosphate + H(+). It participates in protein modification; lipoprotein biosynthesis (diacylglyceryl transfer). Functionally, catalyzes the transfer of the diacylglyceryl group from phosphatidylglycerol to the sulfhydryl group of the N-terminal cysteine of a prolipoprotein, the first step in the formation of mature lipoproteins. This Clostridioides difficile (strain 630) (Peptoclostridium difficile) protein is Phosphatidylglycerol--prolipoprotein diacylglyceryl transferase.